The primary structure comprises 156 residues: Peptide methionine sulfoxide reductase MsrA (156 aa).

Residue cysteine 10 is part of the active site.

It belongs to the MsrA Met sulfoxide reductase family.

It catalyses the reaction L-methionyl-[protein] + [thioredoxin]-disulfide + H2O = L-methionyl-(S)-S-oxide-[protein] + [thioredoxin]-dithiol. The enzyme catalyses [thioredoxin]-disulfide + L-methionine + H2O = L-methionine (S)-S-oxide + [thioredoxin]-dithiol. Functionally, has an important function as a repair enzyme for proteins that have been inactivated by oxidation. Catalyzes the reversible oxidation-reduction of methionine sulfoxide in proteins to methionine. The polypeptide is Peptide methionine sulfoxide reductase MsrA (Metamycoplasma arthritidis (strain 158L3-1) (Mycoplasma arthritidis)).